Here is a 144-residue protein sequence, read N- to C-terminus: Prefoldin subunit alpha (144 aa).

This sequence belongs to the prefoldin subunit alpha family. As to quaternary structure, heterohexamer of two alpha and four beta subunits.

Its subcellular location is the cytoplasm. Molecular chaperone capable of stabilizing a range of proteins. Seems to fulfill an ATP-independent, HSP70-like function in archaeal de novo protein folding. The polypeptide is Prefoldin subunit alpha (Methanococcus maripaludis (strain DSM 14266 / JCM 13030 / NBRC 101832 / S2 / LL)).